A 175-amino-acid chain; its full sequence is Lipopolysaccharide export system protein LptH (175 aa).

An N-terminal signal peptide occupies residues 1 to 24; that stretch reads MRFVNTLPLIFGLTAALGSSMALA.

It belongs to the LptA family. In terms of assembly, component of the lipopolysaccharide transport and assembly complex. Mainly exists as a dimer in solution. Tends to oligomerize already in solution. The protomers follow one another in a head-to-tail fashion throughout the crystal lattice, yielding a continuous fiber arrangement.

The protein resides in the periplasm. Involved in the assembly of lipopolysaccharide (LPS). Required for the translocation of LPS from the inner membrane to the outer membrane. May form a bridge between the inner membrane and the outer membrane, via interactions with LptC and LptD, thereby facilitating LPS transfer across the periplasm. Binds LPS. Important for cell envelope stability and essential for growth, cell viability and ability to cause infection in different animal models. In Pseudomonas aeruginosa (strain ATCC 15692 / DSM 22644 / CIP 104116 / JCM 14847 / LMG 12228 / 1C / PRS 101 / PAO1), this protein is Lipopolysaccharide export system protein LptH.